A 706-amino-acid polypeptide reads, in one-letter code: MSKYEVLQGFYAVHDELGSGGFGKVRLATHLLTNQKVAIKIIDKKQLGHDLPRVQTEMDALRNLSHQNICRLYHYIETEDKFFIVMEYCSGGEMFDYIVRKERLEESEARHFFRQLVSAIAFVHSQGYAHRDLKPENLLLTEDLHLKLIDFGLCAKTEKGRIDKHNLDTCCGSPAYAAPELIQGLQYKGNEADVWSMGILLYTLLVGALPFEDDNMQIMYKKIQSGCFYEPEFLSPLSKQLLRAMLQVVPERRISVKKLLEHDWLNHKYTQPVKWNTIYDKNFIDRDVARVMSKYYGFESTDKMIEKIKEWNFDYMTSTYYALLHRKRNGMEIILPMVRNSTNTAPPNVQNILCSPTIHASLENNLDKSGLEDDDSDPSSISSSSDISARLKKNCVVSDESSSSRFVKPMSPAAEKDKKMSYVNAMLTMPSQFTGRSPLRIPESPMSVRSSDSASLGSAATPSRGGVKDNDKENASTGKNYRMGASTCKSRGPLKITGVEEGTMKSVYTTPNTRPTLRGLFSPGNAEHKKRQRARSSDRASIGMPPGSPVSIGSAHSANNELLADGRTPRSRIKTNRLPQRVFTSLERKKEKLITLLTPRKMQRDSPQVLKDVKNMVNVSMTASQDPEEVRNLLKKVFDDERMRYELNGWKFLATQETVHGWMTVELEIVRLQMFDKVGIRRKRLKGDAFMYKKVCEKILQMAKIE.

Residues Y11 to L265 form the Protein kinase domain. Residues L17–V25 and K40 each bind ATP. D132 (proton acceptor) is an active-site residue. Disordered regions lie at residues L366–D386, F433–P493, and S506–A555. 2 stretches are compositionally biased toward polar residues: residues S447–T461 and S506–P515. One can recognise a KA1 domain in the interval Q656 to I705.

The protein belongs to the protein kinase superfamily. CAMK Ser/Thr protein kinase family. SNF1 subfamily. May be phosphorylated at Thr-169 by par-4 and/or autophosphorylated which likely results in its activation. Phosphorylation is not required for co-localization with the centrosome.

It is found in the cytoplasm. The protein localises to the cytoskeleton. It localises to the microtubule organizing center. Its subcellular location is the centrosome. The catalysed reaction is L-seryl-[protein] + ATP = O-phospho-L-seryl-[protein] + ADP + H(+). It catalyses the reaction L-threonyl-[protein] + ATP = O-phospho-L-threonyl-[protein] + ADP + H(+). Serine/threonine-protein kinase involved in cell autonomous neuroblast asymmetric divisions that generate one precursor cell and one apoptotic cell by controlling spindle positioning, myosin distribution and the segregation of cell fate determinants. Plays a role in neural fate specification in several dopaminergic linages, acting in concert with ham-1. Involved in phosphorylation of multiple proteins associated with key developmental processes, including the cell cycle, apoptosis, endocytosis, and asymmetric cell division. Promotes cell shedding during embryogenesis, probably through the endocytosis-mediated removal of cell adhesion molecules such as hmp-1 from the cell surface. May act downstream of par-4/strd-1/mop-25 to regulate cell shedding. This is Maternal embryonic leucine zipper kinase from Caenorhabditis elegans.